The chain runs to 343 residues: 4-hydroxy-2-oxovalerate aldolase 4 (343 aa).

Residues 8–260 (VTVHDMTLRD…ETGVDVAKIT (253 aa)) enclose the Pyruvate carboxyltransferase domain. 16–17 (RD) is a binding site for substrate. D17 contacts Mn(2+). The active-site Proton acceptor is H20. S170 and H199 together coordinate substrate. Mn(2+) is bound by residues H199 and H201. Y290 is a substrate binding site.

This sequence belongs to the 4-hydroxy-2-oxovalerate aldolase family.

It catalyses the reaction (S)-4-hydroxy-2-oxopentanoate = acetaldehyde + pyruvate. This is 4-hydroxy-2-oxovalerate aldolase 4 from Dechloromonas aromatica (strain RCB).